The following is a 134-amino-acid chain: Cytochrome b5 (134 aa).

The Cytochrome b5 heme-binding domain occupies 5–81; it reads KKVLGFEEVS…MEKYYIGEID (77 aa). Residues H40 and H64 each coordinate heme. Residues 107–127 form a helical membrane-spanning segment; the sequence is FMIKILQFLVPILILGLALVV.

It belongs to the cytochrome b5 family.

The protein resides in the endoplasmic reticulum membrane. The protein localises to the microsome membrane. Membrane bound hemoprotein which function as an electron carrier for several membrane bound oxygenases. This Brassica oleracea var. botrytis (Cauliflower) protein is Cytochrome b5 (CYB5).